We begin with the raw amino-acid sequence, 61 residues long: Large ribosomal subunit protein uL30 (61 aa).

It belongs to the universal ribosomal protein uL30 family. In terms of assembly, part of the 50S ribosomal subunit.

This is Large ribosomal subunit protein uL30 from Corynebacterium glutamicum (strain R).